A 396-amino-acid polypeptide reads, in one-letter code: NADH-quinone oxidoreductase subunit D (396 aa).

Belongs to the complex I 49 kDa subunit family. In terms of assembly, NDH-1 is composed of 14 different subunits. Subunits NuoB, C, D, E, F, and G constitute the peripheral sector of the complex.

It is found in the cell inner membrane. The catalysed reaction is a quinone + NADH + 5 H(+)(in) = a quinol + NAD(+) + 4 H(+)(out). In terms of biological role, NDH-1 shuttles electrons from NADH, via FMN and iron-sulfur (Fe-S) centers, to quinones in the respiratory chain. The immediate electron acceptor for the enzyme in this species is believed to be ubiquinone. Couples the redox reaction to proton translocation (for every two electrons transferred, four hydrogen ions are translocated across the cytoplasmic membrane), and thus conserves the redox energy in a proton gradient. The protein is NADH-quinone oxidoreductase subunit D of Orientia tsutsugamushi (strain Boryong) (Rickettsia tsutsugamushi).